Here is a 276-residue protein sequence, read N- to C-terminus: NADPH-dependent 7-cyano-7-deazaguanine reductase (276 aa).

83–85 contacts substrate; that stretch reads IES. An NADPH-binding site is contributed by 85–86; it reads SK. Cys184 acts as the Thioimide intermediate in catalysis. The active-site Proton donor is Asp191. A substrate-binding site is contributed by 223–224; it reads HE. Position 252 to 253 (252 to 253) interacts with NADPH; the sequence is RG.

This sequence belongs to the GTP cyclohydrolase I family. QueF type 2 subfamily. Homodimer.

The protein localises to the cytoplasm. The catalysed reaction is 7-aminomethyl-7-carbaguanine + 2 NADP(+) = 7-cyano-7-deazaguanine + 2 NADPH + 3 H(+). Its pathway is tRNA modification; tRNA-queuosine biosynthesis. Catalyzes the NADPH-dependent reduction of 7-cyano-7-deazaguanine (preQ0) to 7-aminomethyl-7-deazaguanine (preQ1). This chain is NADPH-dependent 7-cyano-7-deazaguanine reductase, found in Desulfotalea psychrophila (strain LSv54 / DSM 12343).